A 78-amino-acid chain; its full sequence is Large ribosomal subunit protein bL31 (78 aa).

4 residues coordinate Zn(2+): cysteine 16, cysteine 18, cysteine 38, and cysteine 41.

Belongs to the bacterial ribosomal protein bL31 family. Type A subfamily. Part of the 50S ribosomal subunit. It depends on Zn(2+) as a cofactor.

Binds the 23S rRNA. This is Large ribosomal subunit protein bL31 from Frankia casuarinae (strain DSM 45818 / CECT 9043 / HFP020203 / CcI3).